A 286-amino-acid chain; its full sequence is Pantothenate synthetase (286 aa).

31 to 38 provides a ligand contact to ATP; it reads MGALHDGH. The active-site Proton donor is His-38. Residue Gln-62 coordinates (R)-pantoate. Gln-62 serves as a coordination point for beta-alanine. Position 148 to 151 (148 to 151) interacts with ATP; sequence GKKD. Position 154 (Gln-154) interacts with (R)-pantoate. ATP is bound by residues Val-177 and 185–188; that span reads KSSR.

It belongs to the pantothenate synthetase family. As to quaternary structure, homodimer.

It localises to the cytoplasm. The catalysed reaction is (R)-pantoate + beta-alanine + ATP = (R)-pantothenate + AMP + diphosphate + H(+). Its pathway is cofactor biosynthesis; (R)-pantothenate biosynthesis; (R)-pantothenate from (R)-pantoate and beta-alanine: step 1/1. Functionally, catalyzes the condensation of pantoate with beta-alanine in an ATP-dependent reaction via a pantoyl-adenylate intermediate. The sequence is that of Pantothenate synthetase from Staphylococcus carnosus (strain TM300).